Here is a 462-residue protein sequence, read N- to C-terminus: UDP-N-acetylmuramate--L-alanine ligase (462 aa).

119-125 contributes to the ATP binding site; the sequence is GTHGKTT.

It belongs to the MurCDEF family.

It localises to the cytoplasm. It catalyses the reaction UDP-N-acetyl-alpha-D-muramate + L-alanine + ATP = UDP-N-acetyl-alpha-D-muramoyl-L-alanine + ADP + phosphate + H(+). It functions in the pathway cell wall biogenesis; peptidoglycan biosynthesis. Its function is as follows. Cell wall formation. The polypeptide is UDP-N-acetylmuramate--L-alanine ligase (Parabacteroides distasonis (strain ATCC 8503 / DSM 20701 / CIP 104284 / JCM 5825 / NCTC 11152)).